A 444-amino-acid chain; its full sequence is MITIKKGLDLPIAGGPEQVIHDGPAIKHVATLGEEYIGMRPTMRIKVGDKVAKGQVIFEDKKNPGVKYTALASGTVTEINRGAKRVLQSVVIEIEGNDAVAFDKFDASQLDSLSAEQVRNNLIESGMWTALRTRPFSKVPAVDASPAGIFVTAIDTNPHAANPALVIAGHKDDFANGLKVLAKLTEGKVYLCKAPGADIPAANAEVHEFGGVHPAGLPGTHIHFILPASVTRTVWHVGYQDVIAIGQLFTTGELNNNRVIAIAGPKAVKPRLVRTLLGASIETLTTGEVAEGKVRKVSGSVLHGRTATGPHAYLGRYHLQVSLLEEDTEKEFIGWILPGSNKFSITRAFLGHLSPRRLFNMTTSTGGSDRAMVPIGNYERVMPLDILPTMLLRDLVSGDVDGAVALGALELDEEDLALCTFVCPGKYDYGSYLRGCLDTVEREG.

It belongs to the NqrA family. In terms of assembly, composed of six subunits; NqrA, NqrB, NqrC, NqrD, NqrE and NqrF.

It catalyses the reaction a ubiquinone + n Na(+)(in) + NADH + H(+) = a ubiquinol + n Na(+)(out) + NAD(+). Functionally, NQR complex catalyzes the reduction of ubiquinone-1 to ubiquinol by two successive reactions, coupled with the transport of Na(+) ions from the cytoplasm to the periplasm. NqrA to NqrE are probably involved in the second step, the conversion of ubisemiquinone to ubiquinol. The protein is Na(+)-translocating NADH-quinone reductase subunit A of Shewanella amazonensis (strain ATCC BAA-1098 / SB2B).